The primary structure comprises 250 residues: MILLISDLHLEEERPDITRAFLELLGGRARAAEALYILGDFFEVWIGDDAMTPYQLSICQALRELSDSGTQIFLMHGNRDFMLGKAFCKAAGATLLKDPSVVDFYGEPVLLMHGDSLCTRDEAYMRMRRYLRNPLSLWILRHLPLGTRRKLARKLRNESRAQTRMKANDIVDVTPDQVPQVMQEHGVRTLVHGHTHRPAIHKLQIGEQAAKRIVLGDWDRQGWALQVDEQGFQLAAFDFVPTQLALPGSP.

Mn(2+)-binding residues include Asp-7, His-9, Asp-40, Asn-78, and His-113. 78–79 serves as a coordination point for substrate; sequence NR. Positions 121, 159, 163, 166, and 194 each coordinate substrate. His-194 and His-196 together coordinate Mn(2+).

Belongs to the LpxH family. Mn(2+) serves as cofactor.

Its subcellular location is the cell inner membrane. It carries out the reaction UDP-2-N,3-O-bis[(3R)-3-hydroxytetradecanoyl]-alpha-D-glucosamine + H2O = 2-N,3-O-bis[(3R)-3-hydroxytetradecanoyl]-alpha-D-glucosaminyl 1-phosphate + UMP + 2 H(+). It functions in the pathway glycolipid biosynthesis; lipid IV(A) biosynthesis; lipid IV(A) from (3R)-3-hydroxytetradecanoyl-[acyl-carrier-protein] and UDP-N-acetyl-alpha-D-glucosamine: step 4/6. Functionally, hydrolyzes the pyrophosphate bond of UDP-2,3-diacylglucosamine to yield 2,3-diacylglucosamine 1-phosphate (lipid X) and UMP by catalyzing the attack of water at the alpha-P atom. Involved in the biosynthesis of lipid A, a phosphorylated glycolipid that anchors the lipopolysaccharide to the outer membrane of the cell. The protein is UDP-2,3-diacylglucosamine hydrolase of Pseudomonas fluorescens (strain ATCC BAA-477 / NRRL B-23932 / Pf-5).